Consider the following 117-residue polypeptide: Large ribosomal subunit protein uL18 (117 aa).

It belongs to the universal ribosomal protein uL18 family. Part of the 50S ribosomal subunit; part of the 5S rRNA/L5/L18/L25 subcomplex. Contacts the 5S and 23S rRNAs.

Functionally, this is one of the proteins that bind and probably mediate the attachment of the 5S RNA into the large ribosomal subunit, where it forms part of the central protuberance. The polypeptide is Large ribosomal subunit protein uL18 (Leuconostoc citreum (strain KM20)).